We begin with the raw amino-acid sequence, 430 residues long: Histidinol dehydrogenase (430 aa).

Residues S237, Q259, and H262 each coordinate substrate. Zn(2+)-binding residues include Q259 and H262. Active-site proton acceptor residues include E327 and H328. Residues H328, D361, E415, and H420 each contribute to the substrate site. D361 is a Zn(2+) binding site. H420 serves as a coordination point for Zn(2+).

Belongs to the histidinol dehydrogenase family. The cofactor is Zn(2+).

The enzyme catalyses L-histidinol + 2 NAD(+) + H2O = L-histidine + 2 NADH + 3 H(+). It participates in amino-acid biosynthesis; L-histidine biosynthesis; L-histidine from 5-phospho-alpha-D-ribose 1-diphosphate: step 9/9. In terms of biological role, catalyzes the sequential NAD-dependent oxidations of L-histidinol to L-histidinaldehyde and then to L-histidine. The chain is Histidinol dehydrogenase from Mesorhizobium japonicum (strain LMG 29417 / CECT 9101 / MAFF 303099) (Mesorhizobium loti (strain MAFF 303099)).